Here is an 83-residue protein sequence, read N- to C-terminus: Small ribosomal subunit protein uS17 (83 aa).

Belongs to the universal ribosomal protein uS17 family. As to quaternary structure, part of the 30S ribosomal subunit.

Its function is as follows. One of the primary rRNA binding proteins, it binds specifically to the 5'-end of 16S ribosomal RNA. The polypeptide is Small ribosomal subunit protein uS17 (Ehrlichia canis (strain Jake)).